A 452-amino-acid chain; its full sequence is Cysteine--tRNA ligase (452 aa).

C35 contacts Zn(2+). The 'HIGH' region motif lies at 37-47 (PTVYDRAHLGN). Residues C215, H240, and E244 each coordinate Zn(2+). The 'KMSKS' region motif lies at 273 to 277 (KMSKS). K276 contacts ATP.

It belongs to the class-I aminoacyl-tRNA synthetase family. In terms of assembly, monomer. The cofactor is Zn(2+).

It localises to the cytoplasm. It catalyses the reaction tRNA(Cys) + L-cysteine + ATP = L-cysteinyl-tRNA(Cys) + AMP + diphosphate. The chain is Cysteine--tRNA ligase from Gluconobacter oxydans (strain 621H) (Gluconobacter suboxydans).